Consider the following 239-residue polypeptide: Retrotransposon Gag-like protein 6 (239 aa).

A coiled-coil region spans residues 29–69 (LTSLRLTNSALRREASTLRAEKANLTNMLESVMAELTLLRT). Residues 82–94 (PISSITSNGTRPM) are compositionally biased toward polar residues. 2 disordered regions span residues 82–106 (PISS…EPFS) and 214–239 (TGPC…ARNL). Residues 228-239 (PAPALPARARNL) are compositionally biased toward low complexity.

It belongs to the LDOC1 family.

The sequence is that of Retrotransposon Gag-like protein 6 from Homo sapiens (Human).